Here is a 308-residue protein sequence, read N- to C-terminus: Putative acetyl-hydrolase LipR (308 aa).

The N-terminal stretch at 1–40 is a signal peptide; that stretch reads MNLRKNVIRSVLRGARPLFASRRLGIAGRRVLLATLTAGA. The short motif at 76–78 is the Involved in the stabilization of the negatively charged intermediate by the formation of the oxyanion hole element; that stretch reads HGG. Catalysis depends on residues S146, D239, and H269.

It belongs to the 'GDXG' lipolytic enzyme family.

Its function is as follows. Required for maintaining the appropriate mycolic acid composition and permeability of the envelope on its exposure to acidic pH. This chain is Putative acetyl-hydrolase LipR (lipR), found in Mycobacterium tuberculosis (strain ATCC 25618 / H37Rv).